The sequence spans 246 residues: Uridylate kinase (246 aa).

11-14 (KISG) contacts ATP. Gly53 contributes to the UMP binding site. Gly54 and Arg58 together coordinate ATP. UMP-binding positions include Asp74 and 135-142 (TGSPYLTT). Residues Thr162, Tyr169, and Asp172 each contribute to the ATP site.

The protein belongs to the UMP kinase family. In terms of assembly, homohexamer.

It is found in the cytoplasm. It carries out the reaction UMP + ATP = UDP + ADP. Its pathway is pyrimidine metabolism; CTP biosynthesis via de novo pathway; UDP from UMP (UMPK route): step 1/1. Inhibited by UTP. Functionally, catalyzes the reversible phosphorylation of UMP to UDP. This is Uridylate kinase from Chlamydia abortus (strain DSM 27085 / S26/3) (Chlamydophila abortus).